The following is a 383-amino-acid chain: Na(+)/H(+) antiporter NhaA (383 aa).

11 consecutive transmembrane segments (helical) span residues 14–34 (AGGILLVIAAAIAMTIANSPL), 47–67 (FGMSVSHWINDGLMAVFFLLI), 87–107 (IFPAIAAVGGMLAPALIYVAF), 117–137 (GWAIPAATDIAFALGIIALLG), 146–166 (VFLLALAIIDDLGVVVIIALF), 171–191 (LSTMALLVGFIMTGVLFMLNA), 205–225 (AILWFAVLKSGVHATLAGVVI), 252–272 (VAFGILPLFAFANAGISLEGV), 280–300 (MLPLGIALGLLVGKPLGIFTF), 321–341 (IFAVSVLCGIGFTMSIFISSL), and 356–376 (LGILMGSTTAALLGYALLHFS).

This sequence belongs to the NhaA Na(+)/H(+) (TC 2.A.33) antiporter family.

The protein resides in the cell inner membrane. It carries out the reaction Na(+)(in) + 2 H(+)(out) = Na(+)(out) + 2 H(+)(in). In terms of biological role, na(+)/H(+) antiporter that extrudes sodium in exchange for external protons. The chain is Na(+)/H(+) antiporter NhaA from Vibrio alginolyticus.